The sequence spans 198 residues: Probable GTP-binding protein EngB (198 aa).

Residues 22 to 195 enclose the EngB-type G domain; it reads DLPEIALAGR…WKAIHKFTKT (174 aa). GTP is bound by residues 30–37, 57–61, 75–78, 142–145, and 174–176; these read GRSNVGKS, GKTQT, DVPG, TKAD, and FSS. Mg(2+)-binding residues include Ser-37 and Thr-59.

This sequence belongs to the TRAFAC class TrmE-Era-EngA-EngB-Septin-like GTPase superfamily. EngB GTPase family. Mg(2+) is required as a cofactor.

In terms of biological role, necessary for normal cell division and for the maintenance of normal septation. The chain is Probable GTP-binding protein EngB from Bacillus cytotoxicus (strain DSM 22905 / CIP 110041 / 391-98 / NVH 391-98).